A 289-amino-acid polypeptide reads, in one-letter code: Splicing factor C9orf78 (289 aa).

Positions 1–12 (MPVVRKIFRRRR) are enriched in basic residues. The interval 1–27 (MPVVRKIFRRRRGDSESEEDEQDSEEV) is disordered. The segment at 5–58 (RKIFRRRRGDSESEEDEQDSEEVRLKLEETREVQNLRKRPNGVSAVALLVGEKV) is interaction with SNRNP200. A phosphoserine mark is found at serine 15 and serine 17. Tyrosine 147 carries the phosphotyrosine modification. A compositionally biased stretch (basic and acidic residues) spans 232-283 (LNAPIRRNKEEPKARPLRVGDTEKPEPERSPPNRKRPANEKATDDYHYEKFK). A disordered region spans residues 232-289 (LNAPIRRNKEEPKARPLRVGDTEKPEPERSPPNRKRPANEKATDDYHYEKFKKMNRRY). Threonine 253 carries the post-translational modification Phosphothreonine. Phosphoserine is present on serine 261.

The protein belongs to the TLS1 family. Component of the spliceosome. Interacts with SNRNP200; the interaction is direct. Interacts with PRPF8.

It is found in the nucleus. Its subcellular location is the chromosome. The protein localises to the centromere. Functionally, plays a role in pre-mRNA splicing by promoting usage of the upstream 3'-splice site at alternative NAGNAG splice sites; these are sites featuring alternative acceptor motifs separated by only a few nucleotides. May also modulate exon inclusion events. Plays a role in spliceosomal remodeling by displacing WBP4 from SNRNP200 and may act to inhibit SNRNP200 helicase activity. Binds U5 snRNA. Required for proper chromosome segregation. Not required for splicing of shelterin components. The protein is Splicing factor C9orf78 (C9orf78) of Homo sapiens (Human).